A 451-amino-acid chain; its full sequence is Methylenetetrahydrofolate--tRNA-(uracil-5-)-methyltransferase TrmFO (451 aa).

An FAD-binding site is contributed by 9–14; that stretch reads GGGMAG.

This sequence belongs to the MnmG family. TrmFO subfamily. It depends on FAD as a cofactor.

The protein localises to the cytoplasm. The enzyme catalyses uridine(54) in tRNA + (6R)-5,10-methylene-5,6,7,8-tetrahydrofolate + NADH + H(+) = 5-methyluridine(54) in tRNA + (6S)-5,6,7,8-tetrahydrofolate + NAD(+). It catalyses the reaction uridine(54) in tRNA + (6R)-5,10-methylene-5,6,7,8-tetrahydrofolate + NADPH + H(+) = 5-methyluridine(54) in tRNA + (6S)-5,6,7,8-tetrahydrofolate + NADP(+). Its function is as follows. Catalyzes the folate-dependent formation of 5-methyl-uridine at position 54 (M-5-U54) in all tRNAs. The protein is Methylenetetrahydrofolate--tRNA-(uracil-5-)-methyltransferase TrmFO of Dinoroseobacter shibae (strain DSM 16493 / NCIMB 14021 / DFL 12).